Reading from the N-terminus, the 477-residue chain is Trigger factor (477 aa).

The region spanning Glu-169–Leu-254 is the PPIase FKBP-type domain. Positions Val-435 to Ala-477 are disordered. Basic residues predominate over residues Ala-454–Lys-466. The span at Lys-467–Ala-477 shows a compositional bias: basic and acidic residues.

The protein belongs to the FKBP-type PPIase family. Tig subfamily.

The protein resides in the cytoplasm. The catalysed reaction is [protein]-peptidylproline (omega=180) = [protein]-peptidylproline (omega=0). Involved in protein export. Acts as a chaperone by maintaining the newly synthesized protein in an open conformation. Functions as a peptidyl-prolyl cis-trans isomerase. This Brucella suis biovar 1 (strain 1330) protein is Trigger factor.